We begin with the raw amino-acid sequence, 53 residues long: Gene 87 protein (53 aa).

This chain is Gene 87 protein (87), found in Mycobacterium phage L5 (Mycobacteriophage L5).